The primary structure comprises 197 residues: Imidazoleglycerol-phosphate dehydratase (197 aa).

Belongs to the imidazoleglycerol-phosphate dehydratase family.

It localises to the cytoplasm. It carries out the reaction D-erythro-1-(imidazol-4-yl)glycerol 3-phosphate = 3-(imidazol-4-yl)-2-oxopropyl phosphate + H2O. The protein operates within amino-acid biosynthesis; L-histidine biosynthesis; L-histidine from 5-phospho-alpha-D-ribose 1-diphosphate: step 6/9. The polypeptide is Imidazoleglycerol-phosphate dehydratase (Bradyrhizobium sp. (strain BTAi1 / ATCC BAA-1182)).